The sequence spans 493 residues: Probable glycine dehydrogenase (decarboxylating) subunit 2 (493 aa).

The residue at position 269 (Lys269) is an N6-(pyridoxal phosphate)lysine.

This sequence belongs to the GcvP family. C-terminal subunit subfamily. As to quaternary structure, the glycine cleavage system is composed of four proteins: P, T, L and H. In this organism, the P 'protein' is a heterodimer of two subunits. Pyridoxal 5'-phosphate is required as a cofactor.

The catalysed reaction is N(6)-[(R)-lipoyl]-L-lysyl-[glycine-cleavage complex H protein] + glycine + H(+) = N(6)-[(R)-S(8)-aminomethyldihydrolipoyl]-L-lysyl-[glycine-cleavage complex H protein] + CO2. The glycine cleavage system catalyzes the degradation of glycine. The P protein binds the alpha-amino group of glycine through its pyridoxal phosphate cofactor; CO(2) is released and the remaining methylamine moiety is then transferred to the lipoamide cofactor of the H protein. The protein is Probable glycine dehydrogenase (decarboxylating) subunit 2 of Chloroherpeton thalassium (strain ATCC 35110 / GB-78).